Consider the following 255-residue polypeptide: ATP synthase subunit a (255 aa).

The propeptide at Met-1–Asn-6 is removed in mature form. Helical transmembrane passes span Leu-32–Leu-52, Leu-91–Val-111, Leu-121–Ala-141, Pro-159–Leu-200, and Leu-219–Ala-251.

In terms of assembly, F-type ATP synthases have 2 components, the catalytic core F(1) and the membrane-embedded component F(0), linked together by a central stalk and a peripheral stalk. The central stalk, also called rotor shaft, is often seen as part of F(1). The peripheral stalk is seen as part of F(0). F(0) contains the membrane channel next to the rotor. F-type ATP synthases form dimers but each monomer functions independently in ATP generation. The dimer consists of 17 different polypeptides: ATP1 (subunit alpha, 3 molecules per monomer, part of F(1)), ATP2 (subunit beta, 3 copies per monomer, part of F(1)), ATP3 (subunit gamma, part of the central stalk), ATP4 (subunit b, part of the peripheral stalk), ATP5/OSCP (subunit 5/OSCP, part of the peripheral stalk), ATP6 (subunit a, part of the peripheral stalk), ATP7 (subunit d, part of the peripheral stalk), ATP8 (subunit 8, part of the peripheral stalk), OLI1 (subunit c, part of the rotor, 10 molecules per monomer), ATP14 (subunit h, part of the peripheral stalk), ATP15 (subunit epsilon, part of the central stalk), ATP16 (subunit delta, part of the central stalk), ATP17 (subunit f, part of the peripheral stalk), ATP18 (subunit i/j, part of the peripheral stalk), ATP19 (subunit k, dimer-specific, at interface between monomers), ATP20 (subunit g, at interface between monomers), TIM11 (subunit e, at interface between monomers).

It localises to the mitochondrion inner membrane. Mitochondrial membrane ATP synthase (F(1)F(0) ATP synthase or Complex V) produces ATP from ADP in the presence of a proton gradient across the membrane which is generated by electron transport complexes of the respiratory chain. F-type ATP synthases consist of two structural domains, F(1) - containing the extramembraneous catalytic core, and F(0) - containing the membrane proton channel, linked together by a central stalk and a peripheral stalk. During catalysis, ATP synthesis in the catalytic domain of F(1) is coupled via a rotary mechanism of the central stalk subunits to proton translocation. Key component of the proton channel; it may play a direct role in the translocation of protons across the membrane. The polypeptide is ATP synthase subunit a (Yarrowia lipolytica (strain CLIB 122 / E 150) (Yeast)).